We begin with the raw amino-acid sequence, 31 residues long: IVGGVEAVPGVWPYQAALFIIDMYFCGGSLI.

The 31-residue stretch at 1–31 (IVGGVEAVPGVWPYQAALFIIDMYFCGGSLI) folds into the Peptidase S1 domain.

It belongs to the peptidase S1 family.

The protein resides in the secreted. The protein localises to the extracellular space. It catalyses the reaction Preferential cleavage: Tyr-|-Xaa, Trp-|-Xaa, Phe-|-Xaa, Leu-|-Xaa.. This chain is Chymotrypsin, found in Penaeus monodon (Giant tiger prawn).